The primary structure comprises 231 residues: Cytidylate kinase (231 aa).

11-19 serves as a coordination point for ATP; that stretch reads GHSSCGKST.

This sequence belongs to the cytidylate kinase family. Type 1 subfamily.

It localises to the cytoplasm. The enzyme catalyses CMP + ATP = CDP + ADP. It catalyses the reaction dCMP + ATP = dCDP + ADP. The sequence is that of Cytidylate kinase from Porphyromonas gingivalis (strain ATCC BAA-308 / W83).